The following is a 431-amino-acid chain: Glutamate--tRNA ligase 1 (431 aa).

The 'HIGH' region signature appears at 6 to 16 (PSPTGDMHIGN). Residues 235–239 (KMSKR) carry the 'KMSKS' region motif. An ATP-binding site is contributed by Lys-238.

This sequence belongs to the class-I aminoacyl-tRNA synthetase family. Glutamate--tRNA ligase type 1 subfamily. As to quaternary structure, monomer.

It localises to the cytoplasm. It catalyses the reaction tRNA(Glu) + L-glutamate + ATP = L-glutamyl-tRNA(Glu) + AMP + diphosphate. Functionally, catalyzes the attachment of glutamate to tRNA(Glu) in a two-step reaction: glutamate is first activated by ATP to form Glu-AMP and then transferred to the acceptor end of tRNA(Glu). This is Glutamate--tRNA ligase 1 from Campylobacter jejuni subsp. jejuni serotype O:23/36 (strain 81-176).